The sequence spans 301 residues: Acetyl-coenzyme A carboxylase carboxyl transferase subunit beta (301 aa).

The 270-residue stretch at 25–294 (LWIKCPETGE…SAANDVTRGA (270 aa)) folds into the CoA carboxyltransferase N-terminal domain.

The protein belongs to the AccD/PCCB family. Acetyl-CoA carboxylase is a heterohexamer composed of biotin carboxyl carrier protein (AccB), biotin carboxylase (AccC) and two subunits each of ACCase subunit alpha (AccA) and ACCase subunit beta (AccD).

It is found in the cytoplasm. It carries out the reaction N(6)-carboxybiotinyl-L-lysyl-[protein] + acetyl-CoA = N(6)-biotinyl-L-lysyl-[protein] + malonyl-CoA. It functions in the pathway lipid metabolism; malonyl-CoA biosynthesis; malonyl-CoA from acetyl-CoA: step 1/1. Functionally, component of the acetyl coenzyme A carboxylase (ACC) complex. Biotin carboxylase (BC) catalyzes the carboxylation of biotin on its carrier protein (BCCP) and then the CO(2) group is transferred by the transcarboxylase to acetyl-CoA to form malonyl-CoA. This is Acetyl-coenzyme A carboxylase carboxyl transferase subunit beta from Rhizobium etli (strain ATCC 51251 / DSM 11541 / JCM 21823 / NBRC 15573 / CFN 42).